We begin with the raw amino-acid sequence, 369 residues long: DNA replication and repair protein RecF (369 aa).

An ATP-binding site is contributed by 30 to 37 (GENAQGKT).

It belongs to the RecF family.

The protein localises to the cytoplasm. In terms of biological role, the RecF protein is involved in DNA metabolism; it is required for DNA replication and normal SOS inducibility. RecF binds preferentially to single-stranded, linear DNA. It also seems to bind ATP. This chain is DNA replication and repair protein RecF, found in Oceanobacillus iheyensis (strain DSM 14371 / CIP 107618 / JCM 11309 / KCTC 3954 / HTE831).